A 192-amino-acid chain; its full sequence is Fe/S biogenesis protein NfuA (192 aa).

[4Fe-4S] cluster is bound by residues Cys149 and Cys152.

This sequence belongs to the NfuA family. Homodimer. The cofactor is [4Fe-4S] cluster.

Involved in iron-sulfur cluster biogenesis. Binds a 4Fe-4S cluster, can transfer this cluster to apoproteins, and thereby intervenes in the maturation of Fe/S proteins. Could also act as a scaffold/chaperone for damaged Fe/S proteins. This chain is Fe/S biogenesis protein NfuA, found in Shewanella loihica (strain ATCC BAA-1088 / PV-4).